Reading from the N-terminus, the 379-residue chain is Homoserine O-succinyltransferase (379 aa).

Residues 51 to 360 (NAVLICHALS…DAPQGHDAFL (310 aa)) form the AB hydrolase-1 domain. S157 (nucleophile) is an active-site residue. Position 227 (R227) interacts with substrate. Active-site residues include D323 and H356. D357 serves as a coordination point for substrate.

It belongs to the AB hydrolase superfamily. MetX family. Homodimer.

Its subcellular location is the cytoplasm. It carries out the reaction L-homoserine + succinyl-CoA = O-succinyl-L-homoserine + CoA. Its pathway is amino-acid biosynthesis; L-methionine biosynthesis via de novo pathway; O-succinyl-L-homoserine from L-homoserine: step 1/1. Its function is as follows. Transfers a succinyl group from succinyl-CoA to L-homoserine, forming succinyl-L-homoserine. In Pseudomonas savastanoi pv. phaseolicola (strain 1448A / Race 6) (Pseudomonas syringae pv. phaseolicola (strain 1448A / Race 6)), this protein is Homoserine O-succinyltransferase.